The sequence spans 464 residues: Protein FAM90A9 (464 aa).

3 disordered regions span residues 1-42, 70-389, and 411-437; these read MMAR…DPRL, PATL…HDGA, and APSF…SEAP. Basic and acidic residues-rich tracts occupy residues 74-89 and 97-114; these read GKKE…KPRV and NKDK…DPQR. A compositionally biased stretch (low complexity) spans 180–197; that stretch reads LASLSPLRKASLSSSSSL.

Belongs to the FAM90 family.

This chain is Protein FAM90A9 (FAM90A9), found in Homo sapiens (Human).